The chain runs to 558 residues: Scarecrow-like protein 6 (558 aa).

The tract at residues Phe-19–Cys-90 is disordered. The segment covering Ser-54–Asn-75 has biased composition (low complexity). Positions Lys-196–Arg-554 constitute a GRAS domain. The segment at Val-203 to Leu-257 is leucine repeat I (LRI). The interval Tyr-276 to Ile-340 is VHIID. The VHIID signature appears at Leu-307–Asp-311. The interval Phe-356–Pro-388 is leucine repeat II (LRII). Positions Val-396–Lys-479 are PFYRE. The interval Leu-482 to Arg-554 is SAW.

Belongs to the GRAS family. Interacts with Meloidogyne incognita 16D10. In terms of tissue distribution, expressed in seedlings, roots, leaves, flowers and siliques.

The protein resides in the nucleus. Functionally, probable transcription factor involved in plant development. This Arabidopsis thaliana (Mouse-ear cress) protein is Scarecrow-like protein 6 (SCL6).